The primary structure comprises 239 residues: MEILPAIDLKEGRCVRLYQGEFNKETVVNEHPVAQAMIFEKMGANRLHIVDLDGAVLGKSANLSTIEDICKAVRISVQAGGGIRSLSAVEMLLSIGVEKVILGTAALHNRSFLEEVIRLYGEKIIVGIDAKNGYVATRGWLDMSEISYIELAKQMEAVGVQTIIFTDISKDGTLMGPNFAQLQLLQEEVSLRIIASGGISSLQDVEQLQAMNMYGVIIGKALYEKTMDLQEVLRVTKSC.

Residue Asp-8 is the Proton acceptor of the active site. Asp-129 functions as the Proton donor in the catalytic mechanism.

The protein belongs to the HisA/HisF family.

Its subcellular location is the cytoplasm. It carries out the reaction 1-(5-phospho-beta-D-ribosyl)-5-[(5-phospho-beta-D-ribosylamino)methylideneamino]imidazole-4-carboxamide = 5-[(5-phospho-1-deoxy-D-ribulos-1-ylimino)methylamino]-1-(5-phospho-beta-D-ribosyl)imidazole-4-carboxamide. Its pathway is amino-acid biosynthesis; L-histidine biosynthesis; L-histidine from 5-phospho-alpha-D-ribose 1-diphosphate: step 4/9. The chain is 1-(5-phosphoribosyl)-5-[(5-phosphoribosylamino)methylideneamino] imidazole-4-carboxamide isomerase from Bacillus cytotoxicus (strain DSM 22905 / CIP 110041 / 391-98 / NVH 391-98).